Here is a 411-residue protein sequence, read N- to C-terminus: Phosphoglycerate kinase (411 aa).

The disordered stretch occupies residues 1 to 24; that stretch reads MTGLCPLHQPSPLDHPHSGGTPMQ. Substrate-binding positions include 41–43, R56, 79–82, R139, and R172; these read DYN and HFGR. Residues K222, G310, E341, and 369–372 contribute to the ATP site; that span reads GGDS.

Belongs to the phosphoglycerate kinase family. In terms of assembly, monomer.

The protein localises to the cytoplasm. It catalyses the reaction (2R)-3-phosphoglycerate + ATP = (2R)-3-phospho-glyceroyl phosphate + ADP. The protein operates within carbohydrate degradation; glycolysis; pyruvate from D-glyceraldehyde 3-phosphate: step 2/5. The protein is Phosphoglycerate kinase of Deinococcus radiodurans (strain ATCC 13939 / DSM 20539 / JCM 16871 / CCUG 27074 / LMG 4051 / NBRC 15346 / NCIMB 9279 / VKM B-1422 / R1).